A 398-amino-acid chain; its full sequence is Homeobox protein knotted-1-like 1 (398 aa).

Disordered stretches follow at residues 20 to 61 (SPIS…HHHQ), 78 to 102 (NCFR…ASSS), and 241 to 273 (LNNP…EIDP). Residues 23-56 (SSSNKNDNTSDTNNNNNNNNSSNYGPGYNNTNNN) are compositionally biased toward low complexity. A compositionally biased stretch (polar residues) spans 87–102 (PNNNNNPSVKSEASSS). An ELK domain is found at 279–299 (ELKNHLLKKYSGYLSSLKQEL). The homeobox; TALE-type DNA-binding region spans 300 to 363 (SKKKKKGKLP…NQRKRHWKPS (64 aa)).

It belongs to the TALE/KNOX homeobox family. May form heterodimeric complex with the TALE/BELL proteins BEL1, BLH2, BLH8/PNF and BLH9/PNY. Interacts with OFP1, OFP2, OFP4, OFP6 and OFP12. Interacts with CCT7 and CCT8. Interacts with KNATM-B. Binds to AGO10/PNH. Interacts with BZIP30. As to expression, expressed in the vegetative meristem. Present in the base of flower primordia.

It localises to the nucleus. Functionally, may play a role in meristem function, and may be involved in maintaining cells in an undifferentiated, meristematic state, and its expression disappears at the same time the shoot apex undergoes the transition from vegetative to reproductive development. Positive regulator of LATERAL ORGAN BOUNDARIES (LOB). Probably binds to the DNA sequence 5'-TGAC-3'. Able to traffic from the L1 to the L2/L3 layers of the meristem, presumably through plasmodesmata. This is Homeobox protein knotted-1-like 1 (KNAT1) from Arabidopsis thaliana (Mouse-ear cress).